Reading from the N-terminus, the 98-residue chain is Small ribosomal subunit protein bS20 (98 aa).

Positions 1-12 are enriched in basic residues; sequence MAPKKTTKKGGP. The interval 1-20 is disordered; it reads MAPKKTTKKGGPQKRPSAEK.

This sequence belongs to the bacterial ribosomal protein bS20 family.

Binds directly to 16S ribosomal RNA. This is Small ribosomal subunit protein bS20 from Chlamydia caviae (strain ATCC VR-813 / DSM 19441 / 03DC25 / GPIC) (Chlamydophila caviae).